The primary structure comprises 342 residues: RNA 3'-terminal phosphate cyclase (342 aa).

ATP contacts are provided by residues Q102 and H283 to Q287. The Tele-AMP-histidine intermediate role is filled by H308.

It belongs to the RNA 3'-terminal cyclase family. Type 1 subfamily.

It localises to the cytoplasm. It carries out the reaction a 3'-end 3'-phospho-ribonucleotide-RNA + ATP = a 3'-end 2',3'-cyclophospho-ribonucleotide-RNA + AMP + diphosphate. Its function is as follows. Catalyzes the conversion of 3'-phosphate to a 2',3'-cyclic phosphodiester at the end of RNA. The mechanism of action of the enzyme occurs in 3 steps: (A) adenylation of the enzyme by ATP; (B) transfer of adenylate to an RNA-N3'P to produce RNA-N3'PP5'A; (C) and attack of the adjacent 2'-hydroxyl on the 3'-phosphorus in the diester linkage to produce the cyclic end product. The biological role of this enzyme is unknown but it is likely to function in some aspects of cellular RNA processing. This chain is RNA 3'-terminal phosphate cyclase, found in Pseudomonas fluorescens (strain ATCC BAA-477 / NRRL B-23932 / Pf-5).